The chain runs to 300 residues: Acetylglutamate kinase (300 aa).

Substrate contacts are provided by residues 73 to 74 (GG), Arg-95, and Asn-197.

Belongs to the acetylglutamate kinase family. ArgB subfamily.

Its subcellular location is the cytoplasm. The catalysed reaction is N-acetyl-L-glutamate + ATP = N-acetyl-L-glutamyl 5-phosphate + ADP. The protein operates within amino-acid biosynthesis; L-arginine biosynthesis; N(2)-acetyl-L-ornithine from L-glutamate: step 2/4. In terms of biological role, catalyzes the ATP-dependent phosphorylation of N-acetyl-L-glutamate. This Polynucleobacter necessarius subsp. necessarius (strain STIR1) protein is Acetylglutamate kinase.